The following is a 131-amino-acid chain: Amicyanin (131 aa).

A signal peptide spans 1–26 (MISATKIRSCLAACVLAAFGATGALA). One can recognise a Plastocyanin-like domain in the interval 27–131 (DKATIPSESP…PFMRGKVVVE (105 aa)). Positions 79, 118, 121, and 124 each coordinate Cu cation.

Requires Cu cation as cofactor.

The protein resides in the periplasm. Its pathway is one-carbon metabolism; methylamine degradation. Functionally, primary acceptor of electrons from methylamine dehydrogenase. Passes those electrons on either a soluble cytochrome c or to pseudoazurin. The sequence is that of Amicyanin (mauC) from Paracoccus denitrificans.